The following is a 128-amino-acid chain: Large ribosomal subunit protein bL20 (128 aa).

Belongs to the bacterial ribosomal protein bL20 family.

Binds directly to 23S ribosomal RNA and is necessary for the in vitro assembly process of the 50S ribosomal subunit. It is not involved in the protein synthesizing functions of that subunit. The sequence is that of Large ribosomal subunit protein bL20 from Anaplasma phagocytophilum (strain HZ).